The following is a 201-amino-acid chain: Adenylyl-sulfate kinase (201 aa).

The tract at residues 1-23 (MALHDENVVWHSHPVTPQQREQH) is disordered. Residue 35–42 (GLSGSGKS) coordinates ATP. The active-site Phosphoserine intermediate is serine 109.

The protein belongs to the APS kinase family.

It carries out the reaction adenosine 5'-phosphosulfate + ATP = 3'-phosphoadenylyl sulfate + ADP + H(+). It participates in sulfur metabolism; hydrogen sulfide biosynthesis; sulfite from sulfate: step 2/3. Functionally, catalyzes the synthesis of activated sulfate. The sequence is that of Adenylyl-sulfate kinase from Escherichia coli O127:H6 (strain E2348/69 / EPEC).